Consider the following 306-residue polypeptide: Putative transcriptional regulator (306 aa).

The region spanning 1–61 (MIKRNLNDLL…TRTTRSVSPT (61 aa)) is the HTH lysR-type domain. A DNA-binding region (H-T-H motif) is located at residues 21–40 (FTRAAAQLGVTQSALSQSIS).

This sequence belongs to the LysR transcriptional regulatory family.

Functionally, may have a role in the regulation of oprD expression. This chain is Putative transcriptional regulator, found in Pseudomonas aeruginosa (strain ATCC 15692 / DSM 22644 / CIP 104116 / JCM 14847 / LMG 12228 / 1C / PRS 101 / PAO1).